A 930-amino-acid chain; its full sequence is Isoleucine--tRNA ligase (930 aa).

The short motif at 57 to 67 (PYANGNIHVGH) is the 'HIGH' region element. Glu-554 contacts L-isoleucyl-5'-AMP. The 'KMSKS' region signature appears at 595 to 599 (KMSKS). Lys-598 provides a ligand contact to ATP. Zn(2+) contacts are provided by Cys-888, Cys-891, Cys-908, and Cys-911.

It belongs to the class-I aminoacyl-tRNA synthetase family. IleS type 1 subfamily. Monomer. Requires Zn(2+) as cofactor.

It is found in the cytoplasm. It carries out the reaction tRNA(Ile) + L-isoleucine + ATP = L-isoleucyl-tRNA(Ile) + AMP + diphosphate. Its function is as follows. Catalyzes the attachment of isoleucine to tRNA(Ile). As IleRS can inadvertently accommodate and process structurally similar amino acids such as valine, to avoid such errors it has two additional distinct tRNA(Ile)-dependent editing activities. One activity is designated as 'pretransfer' editing and involves the hydrolysis of activated Val-AMP. The other activity is designated 'posttransfer' editing and involves deacylation of mischarged Val-tRNA(Ile). The sequence is that of Isoleucine--tRNA ligase from Streptococcus gordonii (strain Challis / ATCC 35105 / BCRC 15272 / CH1 / DL1 / V288).